The following is a 161-amino-acid chain: Nucleotide-binding protein BMASAVP1_A0673 (161 aa).

Belongs to the YajQ family.

Its function is as follows. Nucleotide-binding protein. This is Nucleotide-binding protein BMASAVP1_A0673 from Burkholderia mallei (strain SAVP1).